The chain runs to 312 residues: Protein-methionine-sulfoxide reductase catalytic subunit MsrP (312 aa).

The tat-type signal signal peptide spans 1–42 (MALFRYPRPLPSEITPRDMYLSRRSLIGGAAALGAVSATADA). Mo-molybdopterin-binding positions include Asn68, 71 to 72 (YE), Cys126, Ser161, Asn211, Arg216, and 227 to 229 (GIK).

It belongs to the MsrP family. As to quaternary structure, heterodimer of a catalytic subunit (MsrP) and a heme-binding subunit (MsrQ). The cofactor is Mo-molybdopterin. Post-translationally, predicted to be exported by the Tat system. The position of the signal peptide cleavage has not been experimentally proven.

It is found in the periplasm. It carries out the reaction L-methionyl-[protein] + a quinone + H2O = L-methionyl-(S)-S-oxide-[protein] + a quinol. The catalysed reaction is L-methionyl-[protein] + a quinone + H2O = L-methionyl-(R)-S-oxide-[protein] + a quinol. In terms of biological role, part of the MsrPQ system that repairs oxidized periplasmic proteins containing methionine sulfoxide residues (Met-O), using respiratory chain electrons. Thus protects these proteins from oxidative-stress damage caused by reactive species of oxygen and chlorine generated by the host defense mechanisms. MsrPQ is essential for the maintenance of envelope integrity under bleach stress, rescuing a wide series of structurally unrelated periplasmic proteins from methionine oxidation. The catalytic subunit MsrP is non-stereospecific, being able to reduce both (R-) and (S-) diastereoisomers of methionine sulfoxide. The chain is Protein-methionine-sulfoxide reductase catalytic subunit MsrP from Gluconobacter oxydans (strain 621H) (Gluconobacter suboxydans).